Here is a 548-residue protein sequence, read N- to C-terminus: 5-aminolevulinate synthase, mitochondrial (548 aa).

A mitochondrion-targeting transit peptide spans 1-22 (MQRSIFARFGNSSAAVSTLNRL). Substrate contacts are provided by arginine 91, serine 204, and lysine 223. Serine 256, histidine 284, and threonine 334 together coordinate pyridoxal 5'-phosphate. Lysine 337 is a catalytic residue. Lysine 337 bears the N6-(pyridoxal phosphate)lysine mark. The pyridoxal 5'-phosphate site is built by threonine 366 and threonine 367. Threonine 452 lines the substrate pocket.

Belongs to the class-II pyridoxal-phosphate-dependent aminotransferase family. Homodimer. Interacts with MCX1. Pyridoxal 5'-phosphate is required as a cofactor.

Its subcellular location is the mitochondrion matrix. The catalysed reaction is succinyl-CoA + glycine + H(+) = 5-aminolevulinate + CO2 + CoA. The protein operates within porphyrin-containing compound metabolism; protoporphyrin-IX biosynthesis; 5-aminolevulinate from glycine: step 1/1. With respect to regulation, ihnhibited by hemin. In terms of biological role, catalyzes the synthesis of 5-aminolevulinate (ALA) from succinyl-CoA and glycine, the first and rate-limiting step in heme biosynthesis. The polypeptide is 5-aminolevulinate synthase, mitochondrial (Saccharomyces cerevisiae (strain ATCC 204508 / S288c) (Baker's yeast)).